We begin with the raw amino-acid sequence, 657 residues long: C4-dicarboxylate transport sensor protein DctS (657 aa).

Over 1–26 (MRDTTGGPAGAEVWTVPGLLGARKLD) the chain is Cytoplasmic. A helical transmembrane segment spans residues 27–51 (LLALIPLVAIVALMTLVGALLFAVA). Topologically, residues 52–252 (QSDANRARAK…AYDAPDAFGN (201 aa)) are periplasmic. Residues 253 to 273 (AALLAAIGALSVFAVLAMVVL) traverse the membrane as a helical segment. The Cytoplasmic segment spans residues 274–657 (HRNALRRRMA…LPVPQEGAPA (384 aa)). One can recognise a PAS domain in the interval 289 to 361 (AEMAFRRAME…ARQRQLIEGQ (73 aa)). The PAC domain maps to 365 to 417 (QAFETRFRRSDGSEIEVQVFEAPLIDAGGRHRGWMGSVIDITQAKQAARLARA). The segment at 407 to 422 (QAKQAARLARAQDESL) is inter-domain linker. Residues 437–652 (TLAHELNQPL…VFTVTLPVPQ (216 aa)) form the Histidine kinase domain. At H440 the chain carries Phosphohistidine; by autocatalysis.

It is found in the cell inner membrane. It carries out the reaction ATP + protein L-histidine = ADP + protein N-phospho-L-histidine.. In terms of biological role, member of the two-component regulatory system DctS/DctR involved in the transport of C4-dicarboxylates. DctS functions as a membrane-associated protein kinase that phosphorylates DctR in response to environmental signals. The chain is C4-dicarboxylate transport sensor protein DctS (dctS) from Rhodobacter capsulatus (Rhodopseudomonas capsulata).